Here is a 96-residue protein sequence, read N- to C-terminus: Putative pterin-4-alpha-carbinolamine dehydratase (96 aa).

This sequence belongs to the pterin-4-alpha-carbinolamine dehydratase family.

The enzyme catalyses (4aS,6R)-4a-hydroxy-L-erythro-5,6,7,8-tetrahydrobiopterin = (6R)-L-erythro-6,7-dihydrobiopterin + H2O. This Rhodospirillum rubrum (strain ATCC 11170 / ATH 1.1.1 / DSM 467 / LMG 4362 / NCIMB 8255 / S1) protein is Putative pterin-4-alpha-carbinolamine dehydratase.